Here is a 170-residue protein sequence, read N- to C-terminus: Type IV pilus assembly protein C (170 aa).

Positions 1–23 (MKSKLPLILINLSLISSPLGANA) are cleaved as a signal peptide. Residues 87–107 (KTVSKPAKSNTPPQQAPVNNS) form a disordered region. Residues 93–107 (AKSNTPPQQAPVNNS) show a composition bias toward polar residues. The stretch at 109 to 166 (RSILEAELSNERKALTEAQKMLSQARLAKGGNINHQKINALQSNVLDRQQNIQALQRE) forms a coiled coil.

The protein localises to the periplasm. Functionally, required for stabilizing type IV pilus (T4p) in extended, nonretracted conformation on the bacterial cell surface. In Neisseria gonorrhoeae (strain ATCC 700825 / FA 1090), this protein is Type IV pilus assembly protein C.